We begin with the raw amino-acid sequence, 693 residues long: Polyribonucleotide nucleotidyltransferase (693 aa).

Mg(2+) is bound by residues Asp-485 and Asp-491. Residues 552–611 (PRIETMQINTSKIATVIGPGGKQIRQIIERSGAQVDINDNGLINISANTQESIDKAKELI) form the KH domain. The S1 motif domain occupies 621–689 (GKIYNGRVTS…EKGQLKLSHK (69 aa)).

Belongs to the polyribonucleotide nucleotidyltransferase family. Mg(2+) is required as a cofactor.

Its subcellular location is the cytoplasm. It carries out the reaction RNA(n+1) + phosphate = RNA(n) + a ribonucleoside 5'-diphosphate. Involved in mRNA degradation. Catalyzes the phosphorolysis of single-stranded polyribonucleotides processively in the 3'- to 5'-direction. The chain is Polyribonucleotide nucleotidyltransferase from Chlamydia muridarum (strain MoPn / Nigg).